A 570-amino-acid chain; its full sequence is Urease subunit alpha 1 (570 aa).

Residues 131 to 570 form the Urease domain; that stretch reads GGIDTHVHFI…VPMAQRYFLF (440 aa). Ni(2+)-binding residues include His136, His138, and Lys219. Lys219 bears the N6-carboxylysine mark. His221 is a binding site for substrate. Positions 248 and 274 each coordinate Ni(2+). The Proton donor role is filled by His322. Asp362 contacts Ni(2+).

It belongs to the metallo-dependent hydrolases superfamily. Urease alpha subunit family. Heterotrimer of UreA (gamma), UreB (beta) and UreC (alpha) subunits. Three heterotrimers associate to form the active enzyme. It depends on Ni cation as a cofactor. In terms of processing, carboxylation allows a single lysine to coordinate two nickel ions.

It localises to the cytoplasm. The enzyme catalyses urea + 2 H2O + H(+) = hydrogencarbonate + 2 NH4(+). Its pathway is nitrogen metabolism; urea degradation; CO(2) and NH(3) from urea (urease route): step 1/1. Its function is as follows. May protect brucellae during their passage through the stomach. The major route of infection in human brucellosis is oral. The protein is Urease subunit alpha 1 of Brucella abortus (strain 2308).